The following is a 374-amino-acid chain: Glutamate 5-kinase (374 aa).

K16 contacts ATP. Residues S56, D143, and N155 each contribute to the substrate site. ATP is bound at residue 175-176 (TD). A PUA domain is found at 282-360 (RGRVVLDAGA…SEIEAVLGYV (79 aa)).

This sequence belongs to the glutamate 5-kinase family.

It is found in the cytoplasm. It catalyses the reaction L-glutamate + ATP = L-glutamyl 5-phosphate + ADP. It functions in the pathway amino-acid biosynthesis; L-proline biosynthesis; L-glutamate 5-semialdehyde from L-glutamate: step 1/2. Its function is as follows. Catalyzes the transfer of a phosphate group to glutamate to form L-glutamate 5-phosphate. This chain is Glutamate 5-kinase, found in Ralstonia nicotianae (strain ATCC BAA-1114 / GMI1000) (Ralstonia solanacearum).